Consider the following 334-residue polypeptide: Tetraacyldisaccharide 4'-kinase (334 aa).

60–67 provides a ligand contact to ATP; sequence TVGGTGKT.

It belongs to the LpxK family.

The catalysed reaction is a lipid A disaccharide + ATP = a lipid IVA + ADP + H(+). Its pathway is glycolipid biosynthesis; lipid IV(A) biosynthesis; lipid IV(A) from (3R)-3-hydroxytetradecanoyl-[acyl-carrier-protein] and UDP-N-acetyl-alpha-D-glucosamine: step 6/6. In terms of biological role, transfers the gamma-phosphate of ATP to the 4'-position of a tetraacyldisaccharide 1-phosphate intermediate (termed DS-1-P) to form tetraacyldisaccharide 1,4'-bis-phosphate (lipid IVA). The polypeptide is Tetraacyldisaccharide 4'-kinase (Stutzerimonas stutzeri (strain A1501) (Pseudomonas stutzeri)).